We begin with the raw amino-acid sequence, 241 residues long: Methylthioribulose-1-phosphate dehydratase (241 aa).

A compositionally biased stretch (basic and acidic residues) spans methionine 1 to aspartate 12. The tract at residues methionine 1–histidine 22 is disordered. Cysteine 101 is a substrate binding site. Zn(2+) contacts are provided by histidine 118 and histidine 120. Glutamate 147 acts as the Proton donor/acceptor in catalysis. Histidine 203 is a binding site for Zn(2+).

It belongs to the aldolase class II family. MtnB subfamily. Zn(2+) is required as a cofactor.

Its subcellular location is the cytoplasm. It carries out the reaction 5-(methylsulfanyl)-D-ribulose 1-phosphate = 5-methylsulfanyl-2,3-dioxopentyl phosphate + H2O. Its pathway is amino-acid biosynthesis; L-methionine biosynthesis via salvage pathway; L-methionine from S-methyl-5-thio-alpha-D-ribose 1-phosphate: step 2/6. In terms of biological role, catalyzes the dehydration of methylthioribulose-1-phosphate (MTRu-1-P) into 2,3-diketo-5-methylthiopentyl-1-phosphate (DK-MTP-1-P). This chain is Methylthioribulose-1-phosphate dehydratase, found in Aspergillus terreus (strain NIH 2624 / FGSC A1156).